We begin with the raw amino-acid sequence, 432 residues long: MGKSVVVLGAQWGDEGKGKIVDLLTDRAKYVVRYQGGHNAGHTLIINGEKTVLRLIPSGILRANVTCLIGNGVVLSPSALMQEMGELESRGINVRERLLISEACPLILPYHVAMDHAREAALGKKAIGTTGRGIGPAYEDKVARRGLRVGDLFDKEQFAEKLKNILDYYNFQLVNYYKVEAVDYQKTLDDVMAVADIITGMVADIGAILNTARKNGDNILFEGAQGAMLDIDHGTYPYVTSSNTTAGGVATGSGLGPRNIDYVLGIIKAYCTRVGGGPFTTELFDEVGQEIARKGNEFGAVTGRPRRCGWFDAVAIRRAIQVNSITGFCMTKLDVLDGFDEVKICVGYKLPNGEVVDYAPLAAKDWEGVEPVYETMPGWKENTFRVTDVDQLPVNCLNYIKRIEEVTGVPVAILSTGPDRVETMILQDPFTA.

Residues 13 to 19 (GDEGKGK) and 41 to 43 (GHT) contribute to the GTP site. Asp14 (proton acceptor) is an active-site residue. Positions 14 and 41 each coordinate Mg(2+). Residues 14–17 (DEGK), 39–42 (NAGH), Thr130, Arg144, Gln225, Thr240, and Arg304 each bind IMP. His42 acts as the Proton donor in catalysis. Substrate is bound at residue 300–306 (AVTGRPR). GTP is bound by residues Arg306, 332 to 334 (KLD), and 415 to 417 (STG).

This sequence belongs to the adenylosuccinate synthetase family. Homodimer. Mg(2+) serves as cofactor.

It is found in the cytoplasm. It catalyses the reaction IMP + L-aspartate + GTP = N(6)-(1,2-dicarboxyethyl)-AMP + GDP + phosphate + 2 H(+). Its pathway is purine metabolism; AMP biosynthesis via de novo pathway; AMP from IMP: step 1/2. Plays an important role in the de novo pathway of purine nucleotide biosynthesis. Catalyzes the first committed step in the biosynthesis of AMP from IMP. In Mannheimia succiniciproducens (strain KCTC 0769BP / MBEL55E), this protein is Adenylosuccinate synthetase.